An 820-amino-acid chain; its full sequence is Crinkler effector protein 108 (820 aa).

Residues 1-17 (MVKLYCAVVGVAGSAFS) form the signal peptide. The interval 18-55 (VRVDESDTVDDLKDAIKAKKPNDFKDIDADKLELYVAK) is LQLFLAK domain. The interval 58–111 (GVWLTEADVKSGVADITGLVRLEVVRAKLFSVGLSDEVVSEVDAQEEAAGRGPV) is DWL domain. The HVLVXXP motif signature appears at 112–117 (NVLVVV). Positions 118 to 124 (PMKKRRV) match the Host nuclear localization signal motif. The C-terminal DC effector domain stretch occupies residues 125–820 (DAGVDEERRF…MHYDDDEADL (696 aa)). N-linked (GlcNAc...) asparagine glycosylation is found at Asn268, Asn371, and Asn703. The segment at 754-791 (NINTASFHELRRLEGVGDATAAKIIAERTIRRFSNLED) is hhH DNA-binding domain.

Belongs to the Crinkler effector family.

The protein resides in the secreted. It is found in the host nucleus. Its function is as follows. Secreted effector that suppresses plant basal defense and promotes plant susceptibility via targeting promoters of host HSP gene and thus inhibiting their expression. CRN108 binds directly to heat shock elements (HSEs) 5'-GAAnnTTC-3' and interferes with the association of the HSE with the plant heat shock transcription factors, which initializes HSP gene expression in response to stress. The polypeptide is Crinkler effector protein 108 (Phytophthora sojae (Soybean stem and root rot agent)).